We begin with the raw amino-acid sequence, 306 residues long: Glutathione transport system permease protein GsiC (306 aa).

At 1–8 (MLNYVLKR) the chain is on the cytoplasmic side. The helical transmembrane segment at 9–29 (LLGLIPTLLIVAVLVFLFVHL) threads the bilayer. Over 30 to 102 (LPGDPARLIA…SRFLPTLWLT (73 aa)) the chain is Periplasmic. The ABC transmembrane type-1 domain occupies 95 to 292 (FLPTLWLTIT…LEFILINLVV (198 aa)). A helical transmembrane segment spans residues 103-123 (ITSMIWAVLFGMAIGIAAAVW). Over 124–134 (RNRWPDRLGMT) the chain is Cytoplasmic. The helical transmembrane segment at 135-155 (LAVTGISFPAFALGMLLMQIF) threads the bilayer. Topologically, residues 156–168 (SVDLGWLPTVGAD) are periplasmic. A helical membrane pass occupies residues 169–189 (SWQHYILPSLTLGAAVASVMA). Topologically, residues 190–228 (RFTRSSFVDVLSEDYMRTARAKGVSETWVVLKHGLRNAM) are cytoplasmic. A helical transmembrane segment spans residues 229-249 (IPVVTMMGLQFGFLLGGSIVV). The Periplasmic portion of the chain corresponds to 250 to 278 (EKVFNWPGLGRLLVDSVDMRDYPVIQAEV). The helical transmembrane segment at 279 to 299 (LLFSLEFILINLVVDVLYAAI) threads the bilayer. Topologically, residues 300-306 (NPAIRYK) are cytoplasmic.

It belongs to the binding-protein-dependent transport system permease family. The complex is composed of two ATP-binding proteins (GsiA), two transmembrane proteins (GsiC and GsiD) and a solute-binding protein (GsiB).

It localises to the cell inner membrane. Its function is as follows. Part of the ABC transporter complex GsiABCD involved in glutathione import. Probably responsible for the translocation of the substrate across the membrane. The chain is Glutathione transport system permease protein GsiC from Salmonella paratyphi A (strain ATCC 9150 / SARB42).